An 819-amino-acid polypeptide reads, in one-letter code: MASGSVQSSSGNGRRQAAVVDEFTVPGDKRSLLEKSRPRIQALFPVLFTVLGSLETFQQSEVKEDEEKPGRIWLQLKGEKQAVRRAKEYVKGICEPELEEKQSYPKEMHCIFAGAQSSFLNHLIQDTCADVALSDIGVLGIKGATEPVVMAQSRVQQFIALFKDNLSLPSHKEPAVKKKFKLYVEKHVDKYTVDLLLLPSALKSELLSLACDNQLSCEDLSRQSSDDKAECKVNQKDEVSRKGAGTPVTELTSQLDSVFSSAAEDSPCLIECPYSEQDRLSVKRRSSEAEERFSKKPFSLEAVQVDGPVNRNADKNNVPIIDLISEPSDFEDSVIVVEADDCVSSETEYKILVNFFKTMGYSQIVVEKVIDDLGQSEEPLKLLEEIEKQSKKELSVPFSQSSSYSTDLLKARGTSSLPKCKIAIAETVQSAAPSKVQPKALLATDKAGPSNPFCYKSQTKATVVNPIPTDQTTIVAPAERAFNNHFDPPLTGVQIFQNSLKVQYRLELKNEPGRWDLKHIIIDGSNVAMSHGLQRFFSCRGIALAVEYFWKKGHRNITVFVPQWRTKRDPFITEQHFLQQLQELGILSFTPSRTVLGARIASHDDRFLLHLAERTGGIIITNDNFREFVVESPSWREIIKERLLQYTFAGDIFMLPDDPLGRYGPKLDDFLSKQPNNRTVHSSFPSSNERFVPRDQFAPPRNMAPKTGLNQPMAPRAGHNQPMAPRAGHNQPMAPRTGLSQHRFLQLIKPQEPFTPALHNIARPCPIMPPERSPSETMQLKEALLKIFPEADQRHKINEILTAHPFMRDLNALSAMVLD.

The segment covering methionine 1–glycine 13 has biased composition (polar residues). Positions methionine 1 to valine 20 are disordered. The region spanning lysine 80–aspartate 164 is the KH-like domain. Positions aspartate 226 to arginine 241 are enriched in basic and acidic residues. Disordered regions lie at residues aspartate 226–proline 247 and lysine 666–arginine 736. The RNase NYN domain maps to leucine 517–aspartate 669. Residues lysine 673–glutamate 689 are compositionally biased toward polar residues. Positions arginine 772–aspartate 819 are coCUN.

The protein belongs to the N4BP1 family.

It localises to the cytoplasm. The protein resides in the cytosol. The protein localises to the nucleus. It is found in the nucleolus. Its subcellular location is the PML body. Its function is as follows. Potent suppressor of cytokine production that acts as a regulator of innate immune signaling and inflammation. Acts as a key negative regulator of select cytokine and chemokine responses elicited by TRIF-independent Toll-like receptors (TLRs), thereby limiting inflammatory cytokine responses to minor insults. Has ribonuclease activity. This Xenopus tropicalis (Western clawed frog) protein is NEDD4-binding protein 1.